The following is a 433-amino-acid chain: Glycerol-3-phosphate dehydrogenase [NAD(+)] (433 aa).

Residues 17–22, Phe-49, and Phe-117 contribute to the NAD(+) site; that span reads GSGNWG. Lys-140 provides a ligand contact to substrate. Ala-173 lines the NAD(+) pocket. Positions 187–246 are disordered; sequence IAYDPPPIDSSRAATPRDRSPNYDSTSANKLPDLTVTSADSNGKDDRGRRTKAKLTPVPE. The span at 208–227 shows a compositional bias: polar residues; sequence NYDSTSANKLPDLTVTSADS. Residue Lys-283 is the Proton acceptor of the active site. Arg-349 and Gln-378 together coordinate NAD(+). 349-350 is a binding site for substrate; sequence RN.

It belongs to the NAD-dependent glycerol-3-phosphate dehydrogenase family.

The catalysed reaction is sn-glycerol 3-phosphate + NAD(+) = dihydroxyacetone phosphate + NADH + H(+). The polypeptide is Glycerol-3-phosphate dehydrogenase [NAD(+)] (Pyricularia oryzae (strain Y34) (Rice blast fungus)).